Consider the following 278-residue polypeptide: Urease accessory protein UreD (278 aa).

This sequence belongs to the UreD family. As to quaternary structure, ureD, UreF and UreG form a complex that acts as a GTP-hydrolysis-dependent molecular chaperone, activating the urease apoprotein by helping to assemble the nickel containing metallocenter of UreC. The UreE protein probably delivers the nickel.

The protein localises to the cytoplasm. Required for maturation of urease via the functional incorporation of the urease nickel metallocenter. This Blochmanniella pennsylvanica (strain BPEN) protein is Urease accessory protein UreD.